Consider the following 109-residue polypeptide: Small ribosomal subunit protein bS20 (109 aa).

The tract at residues 1 to 26 (MANIKSAKKRAIQSEKRRKHNASRRS) is disordered.

Belongs to the bacterial ribosomal protein bS20 family.

Functionally, binds directly to 16S ribosomal RNA. This is Small ribosomal subunit protein bS20 from Hamiltonella defensa subsp. Acyrthosiphon pisum (strain 5AT).